Reading from the N-terminus, the 503-residue chain is MFGDRQRPMVLVLGLGESGLAIARWCARHGCRLRIADTREAPPNLAALQAEGIDAEFVGGAFTPALLDGGIEIVGLSPGLSPLEPALAALVAAANERGVAVWGELEFFAQALRALGTSGYQPKVLAITGTNGKTTTTSLTGLLCQRSGKKVAVAGNISPAMLDRLASAIDETALPDVWVLELSSFQLETARTFAPDAAAILNITQDHLDWHGSFDAYAQAKGLIFGATTTRVLNRDDAAVMKFAPAAGAADAPRTVTFGLNEPTQDGDYGLSRDNGIAWLVEAVDRDAPDEATTTRRRKRDAAHTPDIAQKRLMPADALRIRGLHNAANALAAFALARAIDLPAAPLLHALREYRGEAHRVEVIATIDDVDYVDDSKGTNVGATVAALDGLAQKIVLIAGGDGKGQDFGPLVAPVARWCRAVMLIGRDAPVIRDTLAETGVPLAGHATLEAAVHAAAELAEPGDAVLLSPACASLDMFRNYAHRAEVFRAAVDAIAIDKGATP.

ATP is bound at residue 129–135 (GTNGKTT).

Belongs to the MurCDEF family.

The protein localises to the cytoplasm. The catalysed reaction is UDP-N-acetyl-alpha-D-muramoyl-L-alanine + D-glutamate + ATP = UDP-N-acetyl-alpha-D-muramoyl-L-alanyl-D-glutamate + ADP + phosphate + H(+). It participates in cell wall biogenesis; peptidoglycan biosynthesis. Its function is as follows. Cell wall formation. Catalyzes the addition of glutamate to the nucleotide precursor UDP-N-acetylmuramoyl-L-alanine (UMA). This Burkholderia orbicola (strain MC0-3) protein is UDP-N-acetylmuramoylalanine--D-glutamate ligase.